The chain runs to 165 residues: DNA mimic protein DMP19 (165 aa).

This sequence belongs to the DMP19-like protein family. In terms of assembly, monomer. Homodimer. The monomeric form of DMP19 interacts with the DNA-binding protein HU homodimer with 1:1 stoichiometry. The dimeric form of DMP19 interacts with the Neisseria hypothetical transcription factor (NHTF) dimer.

Activity can be modulated in vitro by crown ethers, which are small cyclic polyethers that can modify protein surface behavior dramatically by stabilizing either intra- or intermolecular interactions, thereby probably altering the protein's tertiary and quaternary structure. In terms of biological role, acts as a DNA mimic. Interacts with DNA-binding proteins and prevents their binding to DNA by occupying the DNA binding sites on the proteins, acting as a competitive inhibitor. DMP19 is a bifunctional DNA mimic protein involved in controlling nucleoid formation as well as gene regulation. This bifunctionality depends on different oligomeric states. The monomeric form interacts with the DNA-binding protein HU, which prevents HU from binding to DNA and forming nucleoids. The dimeric form interacts with the Neisseria hypothetical transcription factor (NHTF) and prevents NHTF from binding to its DNA-binding sites, thereby blocking its repressor activity and influencing expression of the target genes. DMP19 might use these different oligomerizations to regulate genes in two steps: the monomeric form may first release selected gene regions in chromosomal DNA by preventing HU from binding to DNA and forming nucleoids, then the dimeric form blocks the gene repressor activity of NHTF and ensures the continued expression of NHTF-controlled genes. This chain is DNA mimic protein DMP19, found in Neisseria meningitidis serogroup B (strain ATCC BAA-335 / MC58).